A 387-amino-acid chain; its full sequence is Patatin group A-3 (387 aa).

The signal sequence occupies residues 1-23 (MATTKSFLILIVMILATTSSTFA). Residues 32 to 230 (LSIDGGGVKG…TVADPALLSV (199 aa)) form the PNPLA domain. The short motif at 36–41 (GGGVKG) is the GXGXXG element. The GXSXG signature appears at 75-79 (GTSTG). The active-site Nucleophile is the S77. N115 carries N-linked (GlcNAc...) asparagine glycosylation. The active-site Proton acceptor is the D216. Residues 216-218 (DGA) carry the DGA/G motif. Residues 361–385 (ETYEEALKRFAKLLSDRKKLRANKA) are a coiled coil.

Belongs to the patatin family. Tuber and stolon.

It is found in the vacuole. Functionally, probable lipolytic acyl hydrolase (LAH), an activity which is thought to be involved in the response of tubers to pathogens. The protein is Patatin group A-3 of Solanum tuberosum (Potato).